Here is a 123-residue protein sequence, read N- to C-terminus: MPTIQQLIRKPRQPKVKRSKSMHLEQCPQKRGVCTRVYTTTPKKPNSAMRKVAKVRLTNGFEVISYIPGESHNLQEHSVVLIRGGRVKDLPGVRYHILRGVLDTQGVKDRKQRRSKYGAKRPK.

Residues 1–28 are disordered; it reads MPTIQQLIRKPRQPKVKRSKSMHLEQCP. Positions 9–21 are enriched in basic residues; sequence RKPRQPKVKRSKS. Aspartate 89 is modified (3-methylthioaspartic acid).

It belongs to the universal ribosomal protein uS12 family. As to quaternary structure, part of the 30S ribosomal subunit. Contacts proteins S8 and S17. May interact with IF1 in the 30S initiation complex.

In terms of biological role, with S4 and S5 plays an important role in translational accuracy. Its function is as follows. Interacts with and stabilizes bases of the 16S rRNA that are involved in tRNA selection in the A site and with the mRNA backbone. Located at the interface of the 30S and 50S subunits, it traverses the body of the 30S subunit contacting proteins on the other side and probably holding the rRNA structure together. The combined cluster of proteins S8, S12 and S17 appears to hold together the shoulder and platform of the 30S subunit. The chain is Small ribosomal subunit protein uS12 from Ruegeria sp. (strain TM1040) (Silicibacter sp.).